The primary structure comprises 444 residues: Alpha-(1,3)-fucosyltransferase B (444 aa).

The Cytoplasmic segment spans residues 1-6 (MRLAQR). Residues 7 to 27 (YGIALVALLMVGATVLFFWSE) form a helical; Signal-anchor for type II membrane protein membrane-spanning segment. The Lumenal portion of the chain corresponds to 28 to 444 (NIINYENIKF…GNNCSNSSNT (417 aa)). N-linked (GlcNAc...) asparagine glycans are attached at residues Asn-279, Asn-437, and Asn-440.

Belongs to the glycosyltransferase 10 family.

It localises to the golgi apparatus. Its subcellular location is the golgi stack membrane. Its pathway is protein modification; protein glycosylation. This is Alpha-(1,3)-fucosyltransferase B (FucTB) from Drosophila melanogaster (Fruit fly).